Reading from the N-terminus, the 272-residue chain is MNFLQKLEHAWATQNSLLQVGLDPDPARFPAELQGRPDAILSFCRGIVDATAPFASSFKPQIAYFAAHRAEDQLEALCGHIRDKYPHLPIVLDAKRGDIGSTAENYAREAFERYQAHAVTVSPYMGLDSVEPYLAWRDRGVIVLCRTSNPGGSDLQFLPMADGQPLYLHVAGLVADKWNAHGQCGLVVGATYPNELAAVRKRVGDSLPLLVPGIGAQGGDINATVQAGANSARAGMMINSSRAIIYASGGEDWREAAAEAARGLRDAINAVR.

Lys95 (proton donor) is an active-site residue.

The protein belongs to the OMP decarboxylase family. Type 2 subfamily.

The catalysed reaction is orotidine 5'-phosphate + H(+) = UMP + CO2. It functions in the pathway pyrimidine metabolism; UMP biosynthesis via de novo pathway; UMP from orotate: step 2/2. The protein is Orotidine 5'-phosphate decarboxylase of Bordetella avium (strain 197N).